A 222-amino-acid polypeptide reads, in one-letter code: MVRVTFLGHSAFLLEGSKRVLIDPWIEGNPQSPIKIEECKGADVYIVTHDHGDHGLEDAIKLSKRHGGTVVSIYEIAEEARRKGANSLGANIGSFFEVNGVKVVLTKALHSSNLGAPVGAVIELDGKRVYHAGDTGVFYDMKIIGELYKPDLALLPIGGHFVMGPLEASLAIELLGVSKVIPMHYQTFPVLKGKPEELKEHLGRRGIKAEIIALKPGESYEL.

It belongs to the UPF0173 family.

The polypeptide is UPF0173 metal-dependent hydrolase Kcr_0055 (Korarchaeum cryptofilum (strain OPF8)).